A 226-amino-acid chain; its full sequence is Urease accessory protein UreF (226 aa).

This sequence belongs to the UreF family. In terms of assembly, ureD, UreF and UreG form a complex that acts as a GTP-hydrolysis-dependent molecular chaperone, activating the urease apoprotein by helping to assemble the nickel containing metallocenter of UreC. The UreE protein probably delivers the nickel.

It is found in the cytoplasm. Its function is as follows. Required for maturation of urease via the functional incorporation of the urease nickel metallocenter. The sequence is that of Urease accessory protein UreF from Paraburkholderia phymatum (strain DSM 17167 / CIP 108236 / LMG 21445 / STM815) (Burkholderia phymatum).